A 152-amino-acid chain; its full sequence is D-aminoacyl-tRNA deacylase (152 aa).

The Gly-cisPro motif, important for rejection of L-amino acids motif lies at 142-143 (GP).

Belongs to the DTD family. In terms of assembly, homodimer.

The protein localises to the cytoplasm. It carries out the reaction glycyl-tRNA(Ala) + H2O = tRNA(Ala) + glycine + H(+). It catalyses the reaction a D-aminoacyl-tRNA + H2O = a tRNA + a D-alpha-amino acid + H(+). An aminoacyl-tRNA editing enzyme that deacylates mischarged D-aminoacyl-tRNAs. Also deacylates mischarged glycyl-tRNA(Ala), protecting cells against glycine mischarging by AlaRS. Acts via tRNA-based rather than protein-based catalysis; rejects L-amino acids rather than detecting D-amino acids in the active site. By recycling D-aminoacyl-tRNA to D-amino acids and free tRNA molecules, this enzyme counteracts the toxicity associated with the formation of D-aminoacyl-tRNA entities in vivo and helps enforce protein L-homochirality. In Paraburkholderia phymatum (strain DSM 17167 / CIP 108236 / LMG 21445 / STM815) (Burkholderia phymatum), this protein is D-aminoacyl-tRNA deacylase.